Here is a 917-residue protein sequence, read N- to C-terminus: PAX3- and PAX7-binding protein 1 (917 aa).

Residues 1 to 11 show a composition bias toward basic residues; that stretch reads MFRKARRVNVR. Disordered stretches follow at residues 1–123, 143–205, and 229–275; these read MFRK…FKVK, LEKS…GAFS, and RKKR…RIVF. Ser-16 carries the post-translational modification Phosphoserine. A compositionally biased stretch (acidic residues) spans 16 to 28; sequence SEEEERERDEEQE. Composition is skewed to gly residues over residues 40-50 and 73-85; these read EEAGPGGGDRA and AEAG…GAEP. A Glycyl lysine isopeptide (Lys-Gly) (interchain with G-Cter in SUMO1); alternate cross-link involves residue Lys-149. Lys-149 is covalently cross-linked (Glycyl lysine isopeptide (Lys-Gly) (interchain with G-Cter in SUMO2); alternate). 3 positions are modified to phosphoserine: Ser-154, Ser-155, and Ser-158. Residues 161 to 172 are compositionally biased toward basic and acidic residues; it reads PLDKTGHVKDTN. Residues 183–193 are compositionally biased toward acidic residues; that stretch reads GEDEMDMESEK. Residue Ser-191 is modified to Phosphoserine. Basic and acidic residues predominate over residues 234–256; it reads MARELGDFTPHDNEPGKGRLVRE. Acidic residues predominate over residues 257-268; that stretch reads DENDASDDEDDD. A phosphoserine mark is found at Ser-262 and Ser-295. Disordered regions lie at residues 362–381 and 530–564; these read SSDA…TPSN and AERE…EETS. The interval 378 to 558 is necessary and sufficient for interaction with PAX7; sequence TPSNEMTPVT…MADHLEGLSS (181 aa). The span at 542–554 shows a compositional bias: basic and acidic residues; it reads AREQTGKMADHLE. 2 positions are modified to phosphoserine: Ser-557 and Ser-558. Thr-563 bears the Phosphothreonine mark.

The protein belongs to the GCF family. Interacts with PAX3 and PAX7. Interacts with WDR5; associates with a histone methyltransferase (HMT) complex composed at least of RBBP5, ASH2L, SET1, SET2 and KMT2A/MLL1, KMT2D/MLL2, KMT2C/MLL3 and KMT2B/MLL4 through direct interaction with WDR5. In terms of tissue distribution, ubiquitous.

It is found in the nucleus. Its function is as follows. Adapter protein linking the transcription factors PAX3 and PAX7 to the histone methylation machinery and involved in myogenesis. Associates with a histone methyltransferase complex that specifically mediates dimethylation and trimethylation of 'Lys-4' of histone H3. Mediates the recruitment of that complex to the transcription factors PAX3 and PAX7 on chromatin to regulate the expression of genes involved in muscle progenitor cells proliferation including ID3 and CDC20. This chain is PAX3- and PAX7-binding protein 1 (PAXBP1), found in Homo sapiens (Human).